The chain runs to 437 residues: Glutamyl-tRNA reductase (437 aa).

Substrate contacts are provided by residues 49–52 (TCNR), Ser-109, 114–116 (EGQ), and Gln-120. Catalysis depends on Cys-50, which acts as the Nucleophile. 198–203 (GAGRMS) serves as a coordination point for NADP(+).

This sequence belongs to the glutamyl-tRNA reductase family. As to quaternary structure, homodimer.

The catalysed reaction is (S)-4-amino-5-oxopentanoate + tRNA(Glu) + NADP(+) = L-glutamyl-tRNA(Glu) + NADPH + H(+). It functions in the pathway porphyrin-containing compound metabolism; protoporphyrin-IX biosynthesis; 5-aminolevulinate from L-glutamyl-tRNA(Glu): step 1/2. The protein operates within porphyrin-containing compound metabolism; chlorophyll biosynthesis. In terms of biological role, catalyzes the NADPH-dependent reduction of glutamyl-tRNA(Glu) to glutamate 1-semialdehyde (GSA). The sequence is that of Glutamyl-tRNA reductase from Prochlorococcus marinus (strain SARG / CCMP1375 / SS120).